Reading from the N-terminus, the 154-residue chain is Protein FAM162A (154 aa).

Positions 76 to 102 (RFKKEDEIPETVSLEMLDAAKNKMRVK) are required for proapoptotic activity. The chain crosses the membrane as a helical span at residues 103 to 120 (ISYLMIALTVVGCIFMVI).

The protein belongs to the UPF0389 family. In terms of assembly, interacts with HSP90AB1; HSP90AB1 is essential for FAM162A mitochondrial localization and pro-apoptotic activity. Interacts with VDAC2; the interaction is probably involved in inducing mitochondrial permeability transition.

It is found in the mitochondrion membrane. Proposed to be involved in regulation of apoptosis; the exact mechanism may differ between cell types/tissues. May be involved in hypoxia-induced cell death of transformed cells implicating cytochrome C release and caspase activation (such as CASP9) and inducing mitochondrial permeability transition. May be involved in hypoxia-induced cell death of neuronal cells probably by promoting release of AIFM1 from mitochondria to cytoplasm and its translocation to the nucleus; however, the involvement of caspases has been reported conflictingly. The chain is Protein FAM162A (FAM162A) from Homo sapiens (Human).